A 261-amino-acid polypeptide reads, in one-letter code: Imidazole glycerol phosphate synthase subunit HisF (261 aa).

Active-site residues include D16 and D135.

It belongs to the HisA/HisF family. Heterodimer of HisH and HisF.

The protein localises to the cytoplasm. The enzyme catalyses 5-[(5-phospho-1-deoxy-D-ribulos-1-ylimino)methylamino]-1-(5-phospho-beta-D-ribosyl)imidazole-4-carboxamide + L-glutamine = D-erythro-1-(imidazol-4-yl)glycerol 3-phosphate + 5-amino-1-(5-phospho-beta-D-ribosyl)imidazole-4-carboxamide + L-glutamate + H(+). The protein operates within amino-acid biosynthesis; L-histidine biosynthesis; L-histidine from 5-phospho-alpha-D-ribose 1-diphosphate: step 5/9. In terms of biological role, IGPS catalyzes the conversion of PRFAR and glutamine to IGP, AICAR and glutamate. The HisF subunit catalyzes the cyclization activity that produces IGP and AICAR from PRFAR using the ammonia provided by the HisH subunit. This chain is Imidazole glycerol phosphate synthase subunit HisF, found in Mycolicibacterium gilvum (strain PYR-GCK) (Mycobacterium gilvum (strain PYR-GCK)).